The primary structure comprises 320 residues: Lipoyl synthase (320 aa).

Residues Cys-56, Cys-61, Cys-67, Cys-82, Cys-86, Cys-89, and Ser-295 each coordinate [4Fe-4S] cluster. Residues 68–284 enclose the Radical SAM core domain; sequence WNRRTATFMI…REEALKRGFA (217 aa). A disordered region spans residues 300-320; sequence EQSAQAVARRTGAGRAAQTGD. Residues 303 to 320 show a composition bias toward low complexity; sequence AQAVARRTGAGRAAQTGD.

It belongs to the radical SAM superfamily. Lipoyl synthase family. [4Fe-4S] cluster serves as cofactor.

Its subcellular location is the cytoplasm. The catalysed reaction is [[Fe-S] cluster scaffold protein carrying a second [4Fe-4S](2+) cluster] + N(6)-octanoyl-L-lysyl-[protein] + 2 oxidized [2Fe-2S]-[ferredoxin] + 2 S-adenosyl-L-methionine + 4 H(+) = [[Fe-S] cluster scaffold protein] + N(6)-[(R)-dihydrolipoyl]-L-lysyl-[protein] + 4 Fe(3+) + 2 hydrogen sulfide + 2 5'-deoxyadenosine + 2 L-methionine + 2 reduced [2Fe-2S]-[ferredoxin]. It participates in protein modification; protein lipoylation via endogenous pathway; protein N(6)-(lipoyl)lysine from octanoyl-[acyl-carrier-protein]: step 2/2. In terms of biological role, catalyzes the radical-mediated insertion of two sulfur atoms into the C-6 and C-8 positions of the octanoyl moiety bound to the lipoyl domains of lipoate-dependent enzymes, thereby converting the octanoylated domains into lipoylated derivatives. The chain is Lipoyl synthase from Symbiobacterium thermophilum (strain DSM 24528 / JCM 14929 / IAM 14863 / T).